The primary structure comprises 708 residues: Otogelin-like protein (708 aa).

In terms of domain architecture, VWFD spans 1 to 113; the sequence is KIIVNRLARK…SWEIEKSFEV (113 aa). N-linked (GlcNAc...) asparagine glycosylation is present at N553. 4 cysteine pairs are disulfide-bonded: C616/C672, C637/C686, C648/C703, and C652/C705. Residues 616–708 enclose the CTCK domain; sequence CKREERICQK…EPIDCTCQWN (93 aa).

This sequence belongs to the otogelin family.

It localises to the secreted. In Pongo abelii (Sumatran orangutan), this protein is Otogelin-like protein (OTOGL).